Reading from the N-terminus, the 311-residue chain is Thioredoxin reductase (311 aa).

FAD contacts are provided by residues 31 to 39 and 32 to 39; these read FEKGMPGGQ and EKGMPGGQ. Cys133 and Cys136 form a disulfide bridge. 281-290 lines the FAD pocket; sequence DIRIFAPKQV.

The protein belongs to the class-II pyridine nucleotide-disulfide oxidoreductase family. As to quaternary structure, homodimer. FAD serves as cofactor.

The protein resides in the cytoplasm. It carries out the reaction [thioredoxin]-dithiol + NADP(+) = [thioredoxin]-disulfide + NADPH + H(+). The chain is Thioredoxin reductase (trxB) from Helicobacter pylori (strain J99 / ATCC 700824) (Campylobacter pylori J99).